The sequence spans 295 residues: Pyridoxal 5'-phosphate synthase subunit PdxS (295 aa).

Asp25 provides a ligand contact to D-ribose 5-phosphate. Lys82 serves as the catalytic Schiff-base intermediate with D-ribose 5-phosphate. Gly154 contacts D-ribose 5-phosphate. Residue Arg166 participates in D-glyceraldehyde 3-phosphate binding. Residues Gly215 and 236–237 (GS) contribute to the D-ribose 5-phosphate site.

It belongs to the PdxS/SNZ family. In the presence of PdxT, forms a dodecamer of heterodimers.

It carries out the reaction aldehydo-D-ribose 5-phosphate + D-glyceraldehyde 3-phosphate + L-glutamine = pyridoxal 5'-phosphate + L-glutamate + phosphate + 3 H2O + H(+). The protein operates within cofactor biosynthesis; pyridoxal 5'-phosphate biosynthesis. Functionally, catalyzes the formation of pyridoxal 5'-phosphate from ribose 5-phosphate (RBP), glyceraldehyde 3-phosphate (G3P) and ammonia. The ammonia is provided by the PdxT subunit. Can also use ribulose 5-phosphate and dihydroxyacetone phosphate as substrates, resulting from enzyme-catalyzed isomerization of RBP and G3P, respectively. The polypeptide is Pyridoxal 5'-phosphate synthase subunit PdxS (Bacillus cereus (strain Q1)).